Here is a 130-residue protein sequence, read N- to C-terminus: Small ribosomal subunit protein uS9 (130 aa).

This sequence belongs to the universal ribosomal protein uS9 family.

The chain is Small ribosomal subunit protein uS9 from Caldicellulosiruptor saccharolyticus (strain ATCC 43494 / DSM 8903 / Tp8T 6331).